Consider the following 48-residue polypeptide: Large ribosomal subunit protein bL32 (48 aa).

Residues 1–20 (MAVPKRRVSKTRAAKRRTHY) show a composition bias toward basic residues. Residues 1–48 (MAVPKRRVSKTRAAKRRTHYKVSLPMPVKDKDGSYKMPHRANPTTKEY) form a disordered region.

The protein belongs to the bacterial ribosomal protein bL32 family.

The sequence is that of Large ribosomal subunit protein bL32 from Campylobacter jejuni subsp. doylei (strain ATCC BAA-1458 / RM4099 / 269.97).